Reading from the N-terminus, the 299-residue chain is GTPase Era (299 aa).

An Era-type G domain is found at 5–175; that stretch reads RSGFVCFVGR…TDVLAGKLPP (171 aa). The tract at residues 13–20 is G1; the sequence is GRPNTGKS. 13–20 lines the GTP pocket; it reads GRPNTGKS. A G2 region spans residues 39–43; that stretch reads QTTRH. Residues 60–63 are G3; sequence DTPG. Residues 60 to 64 and 124 to 127 contribute to the GTP site; these read DTPGL and TKID. Residues 124–127 are G4; the sequence is TKID. The interval 154 to 156 is G5; sequence VSA. Residues 206–285 form the KH type-2 domain; sequence VRDELPHSLA…YLDLRVKIAK (80 aa).

The protein belongs to the TRAFAC class TrmE-Era-EngA-EngB-Septin-like GTPase superfamily. Era GTPase family. In terms of assembly, monomer.

Its subcellular location is the cell envelope. It localises to the secreted. The protein localises to the cell wall. Its function is as follows. Exhibits GTPase activity. Binds RNA but is probably not involved in ribosome assembly in mycobacteria. The polypeptide is GTPase Era (Mycobacterium sp. (strain JLS)).